A 417-amino-acid polypeptide reads, in one-letter code: Glutamate-1-semialdehyde 2,1-aminomutase (417 aa).

The residue at position 263 (lysine 263) is an N6-(pyridoxal phosphate)lysine.

This sequence belongs to the class-III pyridoxal-phosphate-dependent aminotransferase family. HemL subfamily. It depends on pyridoxal 5'-phosphate as a cofactor.

The protein resides in the cytoplasm. It carries out the reaction (S)-4-amino-5-oxopentanoate = 5-aminolevulinate. It participates in porphyrin-containing compound metabolism; protoporphyrin-IX biosynthesis; 5-aminolevulinate from L-glutamyl-tRNA(Glu): step 2/2. In Methanospirillum hungatei JF-1 (strain ATCC 27890 / DSM 864 / NBRC 100397 / JF-1), this protein is Glutamate-1-semialdehyde 2,1-aminomutase.